A 688-amino-acid polypeptide reads, in one-letter code: MTHKQRAIFEPTLVRTALLDAVKKLDPRVQWRNPVMFVVYLGSWLTTLIWLAILSGHTTGSAMFTGSIALWLWFTVLFANMAEALAEGRSKAQAASLRGVKKTSWAKKLSEARVDAPQEKVSADSLRKGDLVLIEAGDTVPCDGEVLEGGASVDESAITGESAPVIRESGGDFSSVTGGTRVLSDWLVVECRVNPGETFLDRMIAMVEGAKRRKTPNEVALTILLVALTIVFLLATATLYPFSVFSVEASQAGSPVTITVLVALLVCLIPTTIGGLLSAIGVAGMSRMLGANVIATSGRAVEAAGDVDVLLLDKTGTITLGNRQASEFLPAPGVTEQQLADAAQLSSLADETPEGRSIVVLAKQRFNLRERDLHSLNATFIPFSAQTRMSGVNVQERMIRKGAVDAIRRHVESNQGHFPPAVDDLVASVARTGGTPLVVAEGSRVLGVVALKDIVKGGIKERFAELRKMGIKTVMITGDNRLTAAAIAAEAGVDDFLAEATPEAKLALIRQYQAEGRLVAMTGDGTNDAPALAQADVAVAMNSGTQAAKEAGNMVDLDSNPTKLIEVVHIGKQMLMTRGSLTTFSIANDVAKYFAIIPAAFAATYPQLNALNIMQLHSPSSAILSAVIFNALVIVFLIPLALKGVSYKAMSAAALLRRNLWIYGLGGLLVPFVGIKLIDLLLTALNMG.

Helical transmembrane passes span 34 to 54 (PVMF…LAIL), 62 to 82 (AMFT…ANMA), 219 to 239 (VALT…TATL), and 260 to 280 (VLVA…LSAI). Catalysis depends on aspartate 313, which acts as the 4-aspartylphosphate intermediate. ATP is bound by residues aspartate 350, glutamate 354, 383-390 (FSAQTRMS), and lysine 401. The Mg(2+) site is built by aspartate 524 and aspartate 528. Helical transmembrane passes span 594–614 (FAII…LNIM), 622–642 (AILS…PLAL), and 662–682 (IYGL…DLLL).

This sequence belongs to the cation transport ATPase (P-type) (TC 3.A.3) family. Type IA subfamily. As to quaternary structure, the system is composed of three essential subunits: KdpA, KdpB and KdpC.

The protein resides in the cell inner membrane. It catalyses the reaction K(+)(out) + ATP + H2O = K(+)(in) + ADP + phosphate + H(+). Functionally, part of the high-affinity ATP-driven potassium transport (or Kdp) system, which catalyzes the hydrolysis of ATP coupled with the electrogenic transport of potassium into the cytoplasm. This subunit is responsible for energy coupling to the transport system and for the release of the potassium ions to the cytoplasm. This is Potassium-transporting ATPase ATP-binding subunit from Yersinia pseudotuberculosis serotype O:1b (strain IP 31758).